The primary structure comprises 33 residues: Omega-conotoxin-like Vn2 (33 aa).

Intrachain disulfides connect Cys3–Cys20, Cys10–Cys24, and Cys19–Cys28. Pro33 carries the proline amide modification.

Expressed by the venom duct.

The protein resides in the secreted. Omega-conotoxins act at presynaptic membranes, they bind and block voltage-gated calcium channels (Cav). Has strong insecticidal properties at a dose of only 100 pmol/g of body weight (when injected into the haemocoel of the wax moth G.mellonella larvae). Provoques tremor and uncontrolled movements in insect larvae, that are typical symptoms caused by neurotoxins. On fish G.niger, intraperitoneal injection of the toxin causes full extension of the fins, change in posture, breathing difficulties (at 30 and 100 pmol/g body weight) and death (at 100 pmol/g body weight). This chain is Omega-conotoxin-like Vn2, found in Conus ventricosus (Mediterranean cone).